Consider the following 922-residue polypeptide: Alpha-actinin, sarcomeric (922 aa).

The interval 1-252 is actin-binding; sequence MMENGGYVGQ…IMTYVSCYYH (252 aa). Calponin-homology (CH) domains are found at residues 36-140 and 149-255; these read KQQK…LRFA and MTAK…HAFQ. Spectrin repeat units follow at residues 253-393, 394-508, 509-629, and 630-742; these read AFQG…MVSD, ITNS…RCQR, ICDQ…SADL, and ISRK…TMET. 2 EF-hand domains span residues 776–811 and 817–852; these read EQLTEFRSSFNHFDKNRTGRLAPEEFKSCLVSLGYS and QGDMDFQRILAVVDPNASGYVQFDAFLDFMTRESTD. Ca(2+) contacts are provided by Asp-789, Asn-791, Thr-793, Arg-795, and Glu-800.

It belongs to the alpha-actinin family. In terms of assembly, homodimer; antiparallel.

Its function is as follows. F-actin cross-linking protein which is thought to anchor actin to a variety of intracellular structures. This is a bundling protein. The sequence is that of Alpha-actinin, sarcomeric (Actn) from Anopheles gambiae (African malaria mosquito).